A 145-amino-acid chain; its full sequence is Large ribosomal subunit protein uL16 (145 aa).

Belongs to the universal ribosomal protein uL16 family. In terms of assembly, part of the 50S ribosomal subunit.

Binds 23S rRNA and is also seen to make contacts with the A and possibly P site tRNAs. The chain is Large ribosomal subunit protein uL16 from Desulfitobacterium hafniense (strain DSM 10664 / DCB-2).